The following is a 363-amino-acid chain: Anhydro-N-acetylmuramic acid kinase (363 aa).

An ATP-binding site is contributed by 10-17 (GTSLDGMD).

This sequence belongs to the anhydro-N-acetylmuramic acid kinase family.

The enzyme catalyses 1,6-anhydro-N-acetyl-beta-muramate + ATP + H2O = N-acetyl-D-muramate 6-phosphate + ADP + H(+). Its pathway is amino-sugar metabolism; 1,6-anhydro-N-acetylmuramate degradation. It functions in the pathway cell wall biogenesis; peptidoglycan recycling. Functionally, catalyzes the specific phosphorylation of 1,6-anhydro-N-acetylmuramic acid (anhMurNAc) with the simultaneous cleavage of the 1,6-anhydro ring, generating MurNAc-6-P. Is required for the utilization of anhMurNAc either imported from the medium or derived from its own cell wall murein, and thus plays a role in cell wall recycling. Contributes to intrinsic fosfomycin resistance in P.aeruginosa. The sequence is that of Anhydro-N-acetylmuramic acid kinase from Pseudomonas aeruginosa (strain ATCC 15692 / DSM 22644 / CIP 104116 / JCM 14847 / LMG 12228 / 1C / PRS 101 / PAO1).